A 400-amino-acid chain; its full sequence is MSESVRTNTSIWSKGMLSVIVAQFLSAFGDNALLFATLALLKAQFYPDWSQPVLQMVFVGAYILFAPFVGQIADSFAKGRVMMVANGLKLAGAAGICLGINPFVGYTLVGIGAAAYSPAKYGILGELTTGDKLVKANGLMEASTIAAILLGSVAGGVLADWHVIAALVACALAYAGAVAANLFIPKLVAARPGQSWRLSAMTRSFFSACVVLWRNGETRFSLVGTGLFWGAGVTLRFLLVLWVPVALGITDNATPTYLNAMVAVGIVVGAGAAAKLVTLETVSRCMPAGILIGVVVAIFSLQHALLPAYALLLLIGMLGGFFVVPLNALLQERGKKSVGAGNAIAVQNLGENSAMLLMLGLYSLAVLVGVPAVAIGIGFGVLFALAIAALWIWQRRQASY.

12 consecutive transmembrane segments (helical) span residues 19–39, 53–73, 91–111, 139–159, 164–184, 195–213, 227–247, 257–277, 281–301, 304–324, 352–372, and 373–393; these read VIVA…ATLA, VLQM…GQIA, AGAA…LVGI, LMEA…GVLA, IAAL…NLFI, SWRL…VVLW, LFWG…PVAL, YLNA…AKLV, TVSR…IFSL, ALLP…FFVV, NSAM…GVPA, and VAIG…LWIW.

This sequence belongs to the major facilitator superfamily. LplT (TC 2.A.1.42) family.

It is found in the cell inner membrane. In terms of biological role, catalyzes the facilitated diffusion of 2-acyl-glycero-3-phosphoethanolamine (2-acyl-GPE) into the cell. The polypeptide is Lysophospholipid transporter LplT (Salmonella newport (strain SL254)).